The sequence spans 326 residues: Transmembrane protein 171 (326 aa).

4 helical membrane-spanning segments follow: residues 22–42 (IFFL…LSIF), 57–77 (MMLK…VILA), 114–134 (LIFG…GIWV), and 161–181 (FLSL…FFVV). The interval 229–326 (FPESSASAAA…LSPSSEPSPP (98 aa)) is disordered. Positions 230 to 240 (PESSASAAARS) are enriched in low complexity. Residues 257 to 266 (SIFQSGSPTP) are compositionally biased toward polar residues. Composition is skewed to low complexity over residues 288-302 (SSSE…LSEL) and 312-326 (ATTT…PSPP).

The protein localises to the membrane. The protein is Transmembrane protein 171 (TMEM171) of Bos taurus (Bovine).